A 122-amino-acid chain; its full sequence is Large ribosomal subunit protein bL12 (122 aa).

The protein belongs to the bacterial ribosomal protein bL12 family. In terms of assembly, homodimer. Part of the ribosomal stalk of the 50S ribosomal subunit. Forms a multimeric L10(L12)X complex, where L10 forms an elongated spine to which 2 to 4 L12 dimers bind in a sequential fashion. Binds GTP-bound translation factors.

In terms of biological role, forms part of the ribosomal stalk which helps the ribosome interact with GTP-bound translation factors. Is thus essential for accurate translation. This is Large ribosomal subunit protein bL12 from Enterococcus faecalis (strain ATCC 700802 / V583).